Consider the following 205-residue polypeptide: High frequency lysogenization protein HflD homolog (205 aa).

This sequence belongs to the HflD family.

The protein localises to the cytoplasm. The protein resides in the cell inner membrane. This Aliivibrio fischeri (strain MJ11) (Vibrio fischeri) protein is High frequency lysogenization protein HflD homolog.